We begin with the raw amino-acid sequence, 543 residues long: Secreted effector protein SptP (543 aa).

The interval 35–139 is chaperone-binding; the sequence is TDKAYVAPEK…FINLIKNKDN (105 aa). Residues 162-293 enclose the Bacterial Rho-GAP domain; it reads DVGAESKQPL…TAELEKIKAG (132 aa). The 229-residue stretch at 315-543 folds into the Tyrosine-protein phosphatase domain; sequence IPINQQTQVK…QAQLLMTTAS (229 aa). Residue Cys-481 is the Phosphocysteine intermediate of the active site.

In terms of assembly, forms a complex with SicP.

It localises to the secreted. Its subcellular location is the host cytoplasm. It catalyses the reaction O-phospho-L-tyrosyl-[protein] + H2O = L-tyrosyl-[protein] + phosphate. Functionally, effector proteins function to alter host cell physiology and promote bacterial survival in host tissues. This protein includes tyrosine phosphatase and GTPase activating protein (GAP) activities. After bacterial internalization, GAP mediates the reversal of the cytoskeletal changes induced by SopE. This function is independent of its tyrosine phosphatase activity, which remains unclear. The polypeptide is Secreted effector protein SptP (sptP) (Salmonella typhi).